The sequence spans 376 residues: MEVPRLSQHMSTPNSPCEEMIKNLSLENIQLCERDGNKSQDSGIAEMEELPVPHNIKISNITCDSFKISWDMDPKSKDRITHYFVDLNKKENKNSNKFKHKDVPTKLVAKAVPLPMTVRGHWFLSPRTEYTVAVQTASKQVDGDYAVSEWSEIIEFCTADYSKVHLTQLMEKAEAIAGRMLKFSVFYRNQHKEYFDYIREHHGNVMQPSPKDNSGSHGSPISAKLEGIFFSCNTEFNTGKPQQDSPYGRYRVEIPAEKLFNPNTNLYFGDFYCMYTAYHYVILVIAPMGSPGDEFCKQRLPQLSLSDNKFLTCTQEHDGLVFHQAQDVILEVIYTDPVDLSWGNVAEIIGHQLMSLSTADAKKDPSCKTCNISVGR.

Residues 52–161 (VPHNIKISNI…EIIEFCTADY (110 aa)) enclose the Fibronectin type-III domain.

This sequence belongs to the PHYHIP family.

May play a role in the development of the central system. The protein is Phytanoyl-CoA hydroxylase-interacting protein-like (phyhipl) of Xenopus laevis (African clawed frog).